Reading from the N-terminus, the 350-residue chain is MPGPAAGSRARVYAEVNSLRSREYWDYEAHVPSWGNQDDYQLVRKLGRGKYSEVFEAINITNNERVVVKILKPVKKKKIKREVKILENLRGGTNIINLIDTVKDPVSKTPALVFEYINNTDFKQLYQILTDFDIRFYMYELLKALDYCHSMGIMHRDVKPHNVMIDHQQKKLRLIDWGLAEFYHPAQEYNVRVASRYFKGPELLVDYQMYDYSLDMWSLGCMLASMIFRKEPFFHGQDNYDQLVRIAKVLGTDELYGYLKKYHIELDPHFNDILGQHSRKRWENFIHSENRHLVSPEVLDLLDKLLRYDHQQRLTAKEAMEHPYFYPVVKEQSQPSSENAVLSSGLTTAR.

Residues 40 to 325 (YQLVRKLGRG…AKEAMEHPYF (286 aa)) form the Protein kinase domain. ATP-binding positions include 46–54 (LGRGKYSEV) and K69. D157 serves as the catalytic Proton acceptor.

Belongs to the protein kinase superfamily. Ser/Thr protein kinase family. CK2 subfamily. In terms of assembly, tetramer composed of an alpha chain, an alpha' and two beta chains.

The enzyme catalyses L-seryl-[protein] + ATP = O-phospho-L-seryl-[protein] + ADP + H(+). It catalyses the reaction L-threonyl-[protein] + ATP = O-phospho-L-threonyl-[protein] + ADP + H(+). In terms of biological role, casein kinases are operationally defined by their preferential utilization of acidic proteins such as caseins as substrates. The alpha and alpha' chains contain the catalytic site. Participates in Wnt signaling. In Gallus gallus (Chicken), this protein is Casein kinase II subunit alpha'.